Here is a 434-residue protein sequence, read N- to C-terminus: ATP-dependent protease ATPase subunit HslU (434 aa).

ATP-binding positions include Val18, 60-65, Asp247, Glu312, and Arg384; that span reads GVGKTE.

The protein belongs to the ClpX chaperone family. HslU subfamily. As to quaternary structure, a double ring-shaped homohexamer of HslV is capped on each side by a ring-shaped HslU homohexamer. The assembly of the HslU/HslV complex is dependent on binding of ATP.

The protein localises to the cytoplasm. Its function is as follows. ATPase subunit of a proteasome-like degradation complex; this subunit has chaperone activity. The binding of ATP and its subsequent hydrolysis by HslU are essential for unfolding of protein substrates subsequently hydrolyzed by HslV. HslU recognizes the N-terminal part of its protein substrates and unfolds these before they are guided to HslV for hydrolysis. The polypeptide is ATP-dependent protease ATPase subunit HslU (Rhodopseudomonas palustris (strain BisB18)).